Consider the following 1112-residue polypeptide: MSGGDVEEYLRGADMPEEYRRYYSSLSGGTYDIFEKAASAKSNLADSSGMVEPKIAVDLSDRVAKMHDLDIAGPLRELLATKGKELAALMLAKEIMDGKYLPEADIEKRIDSAVRVGLAVVTEGVTIAPLQGIADVITKKNKDGSEYLSVSIAGPMRSAGGTESAVTMLIADYVRRQAGLAEYQADSLDDETGRFIEELRIYEREVGSFQFHVLDEDIRAVISHLPVELDGVDTDPYEVVNHKGMSRIQTDRVRGGALRVLNDGLIGRSKKLLKRIELYGLDGWEWLAELKGAVQTGENKEDAAAKRMREVITGRSVLSMPNRLGGFRLRYGRACNTGYTSVGFHPAVAEILDHTIAVGTQVKIDIPGKGATVAFVDTIEAPTVRLAGGDVVKIRDVAHGIELKGSIERILHLGDMLISFGDFLENNAQLVPSGYVEEIWKMDMEAAGAAQGSPSSADEAVRISRELGVPLHPRYLYYWDQISHEELAMLLSPLDKGDAISYPAACKPVLEKLGVPHKAGPEGPVLEGDEARIFRELILDNPPGPDASAPVPELISRSSGITIRDKFSTSIGVRIGRPEKAAPRQMRPPTHCLFPVGGTGGPTNNLLKSAARPGFSADILSRRCPGCGEPSISIRCWACGERTAVERTCMQCGTDVDGEECERCGRPGLAHSRVEFPLKKMLVSAQEKTGVRAHDPLKGVKELAHQDRIAEPLEKGLIRQSRSLTVFKDGTVRFDATNSPMTHFKPSWIGTSAEKLRELGYETDVDGKKLEGPDQLVELRMQDIVIPLEGAKYLVSACGYIDAELDKLYGAPPFYKVPDLGGLIGHLVVGLAPHTSVGVAARIIGYTETHVCFGTPNWHSAKRRDADGDADSIILLMDALLNFSRHYLSDRIGGLMDAPLLIQPLVLPHESQSQAHNIEVVKRLPPGFYEAAAARKKASEVGCVEIVKSRLETAGQFGGYHFTHGTSSLTTSRPRSAYSTLGSMLDKLDLQIRNANLIAAVDAAEIISNVISTHLVPDIMGNLRAYARQNFRCTACGKSYRRIPLAQRCSCGNGLIQTITRASVEKYLKLAKRLVNEYDVGAYQRGRIHALSDEIELVFGKGGGDQALLTDF.

This sequence belongs to the archaeal DNA polymerase II family. In terms of assembly, heterodimer of a large subunit and a small subunit.

It carries out the reaction DNA(n) + a 2'-deoxyribonucleoside 5'-triphosphate = DNA(n+1) + diphosphate. The enzyme catalyses Exonucleolytic cleavage in the 3'- to 5'-direction to yield nucleoside 5'-phosphates.. In terms of biological role, possesses two activities: a DNA synthesis (polymerase) and an exonucleolytic activity that degrades single-stranded DNA in the 3'- to 5'-direction. Has a template-primer preference which is characteristic of a replicative DNA polymerase. The protein is DNA polymerase II large subunit of Cenarchaeum symbiosum (strain A).